Reading from the N-terminus, the 286-residue chain is Master replication protein (286 aa).

Residues 2–96 (ARQVICWCFT…LEGPWEYGEF (95 aa)) form the CRESS-DNA virus Rep endonuclease domain. The short motif at 9-12 (CFTL) is the RCR-1 element. A divalent metal cation contacts are provided by Glu-33 and His-41. Positions 41-43 (HFQ) match the RCR-2 motif. A Nuclear localization signal motif is present at residues 50–70 (KRTSLAGMKKLIPGAHFEKRR). Tyr-79 (for DNA cleavage activity) is an active-site residue. An RCR-3 motif is present at residues 79-82 (YAMK). Asp-84 is an a divalent metal cation binding site. The Nuclear localization signal signature appears at 96-102 (FIPTIED). Position 180-188 (180-188 (GPQGGEGKT)) interacts with ATP.

Belongs to the nanoviridea/circoviridae replication-associated protein family. Homooligomer (Potential). Rep binds to repeated DNA motifs (iterons). It depends on Mg(2+) as a cofactor. The cofactor is Mn(2+).

Its subcellular location is the host nucleus. It carries out the reaction ATP + H2O = ADP + phosphate + H(+). Essential for the replication of all genomic viral ssDNA (trans-replication). The closed circular ssDNA genome is first converted to a superhelical dsDNA. Rep binds a specific hairpin at the genome origin of replication. Introduces an endonucleolytic nick within the conserved sequence 5'-A[GT]TATTAC-3' in the intergenic region of the genome, thereby initiating the rolling circle replication (RCR). Following cleavage, binds covalently to the 5'-phosphate of DNA as a tyrosyl ester. The cleavage gives rise to a free 3'-OH that serves as a primer for the cellular DNA polymerase. The polymerase synthesizes the (+) strand DNA by rolling circle mechanism. After one round of replication, a Rep-catalyzed nucleotidyl transfer reaction releases a circular single-stranded virus genome, thereby terminating the replication. Displays origin-specific DNA cleavage, nucleotidyl transferase, ATPase and helicase activities. This is Master replication protein (DNA-R) from Astragalus sinicus (Chinese milk vetch).